An 801-amino-acid chain; its full sequence is Cation/H(+) antiporter 28 (801 aa).

The next 12 helical transmembrane spans lie at 24–44 (ALKI…HYLM), 77–97 (SITL…VMGL), 113–133 (FIAY…TPFL), 140–160 (PYIF…PILT), 179–199 (AAGV…FIFF), 216–236 (LLMF…SPIF), 252–272 (GSHL…PTWP), 275–292 (SMYN…FLPN), 304–324 (INYL…GFII), 343–363 (LLGT…LLLG), 371–391 (SLGL…ALAI), and 403–423 (LIIF…MDII).

The protein belongs to the monovalent cation:proton antiporter 2 (CPA2) transporter (TC 2.A.37) family. CHX (TC 2.A.37.4) subfamily. Specifically expressed in pollen.

It is found in the membrane. Its function is as follows. May operate as a cation/H(+) antiporter. The polypeptide is Cation/H(+) antiporter 28 (CHX28) (Arabidopsis thaliana (Mouse-ear cress)).